The sequence spans 227 residues: UPF0173 metal-dependent hydrolase BCB4264_A4722 (227 aa).

This sequence belongs to the UPF0173 family.

This is UPF0173 metal-dependent hydrolase BCB4264_A4722 from Bacillus cereus (strain B4264).